Consider the following 261-residue polypeptide: Protein FAM216A (261 aa).

The segment at 1-52 (MPSRCPGVAGPPALARTEGSEGSAGQSYHQNSKGTGEQHKAERIKEGHRMSS) is disordered. A compositionally biased stretch (polar residues) spans 23–35 (SAGQSYHQNSKGT). Residues 36-49 (GEQHKAERIKEGHR) show a composition bias toward basic and acidic residues.

Belongs to the FAM216 family.

The sequence is that of Protein FAM216A (Fam216a) from Rattus norvegicus (Rat).